Here is a 109-residue protein sequence, read N- to C-terminus: UPF0235 protein MA_4097 (109 aa).

It belongs to the UPF0235 family.

The protein is UPF0235 protein MA_4097 of Methanosarcina acetivorans (strain ATCC 35395 / DSM 2834 / JCM 12185 / C2A).